A 391-amino-acid chain; its full sequence is Probable sugar efflux transporter (391 aa).

Transmembrane regions (helical) follow at residues 16–36, 51–71, 82–102, 110–130, 138–158, 170–190, 210–230, 247–267, 277–297, 300–320, 338–358, and 361–381; these read VFVFSLSAFIFNTTEFVPVAL, VGLMITAYAWVVSLGSLPLML, LLFLFALFILSHILSALAWNF, MGIAFTHSIFWSITASLVIRV, QALGLLALGSSLAMILGLPLG, TFGVIGGVATLIALLMWKLLP, PLLMGIYLLVIMVISGHFTTY, ITTLMLFVFGLAGVAGSFLFS, FIAFAMVLVICPQLLLFVFKN, WVIFLQIFLWGIGITSLTIAL, IFSGSYNVGIGSGALFGSIVI, and LGLEYIGFVGGALGLLALFWL.

Belongs to the major facilitator superfamily. SotB (TC 2.A.1.2) family.

The protein localises to the cell inner membrane. Involved in the efflux of sugars. The physiological role may be the reduction of the intracellular concentration of toxic sugars or sugar metabolites. The chain is Probable sugar efflux transporter from Helicobacter pylori (strain HPAG1).